Here is a 201-residue protein sequence, read N- to C-terminus: Small ribosomal subunit protein uS5 (201 aa).

The tract at residues 1-28 is disordered; it reads MARGEQQRGEGGQRRDRRDRNAPEERVD. The S5 DRBM domain occupies 31 to 94; that stretch reads IVEKLVHINR…EEAKKTMIRV (64 aa). The segment at 173–201 is disordered; it reads QIAAKRGKKVGDILGRRADGASAPEAIEG. The segment covering 181–191 has biased composition (basic and acidic residues); the sequence is KVGDILGRRAD.

This sequence belongs to the universal ribosomal protein uS5 family. Part of the 30S ribosomal subunit. Contacts proteins S4 and S8.

In terms of biological role, with S4 and S12 plays an important role in translational accuracy. Functionally, located at the back of the 30S subunit body where it stabilizes the conformation of the head with respect to the body. The chain is Small ribosomal subunit protein uS5 from Caulobacter vibrioides (strain ATCC 19089 / CIP 103742 / CB 15) (Caulobacter crescentus).